The primary structure comprises 209 residues: Potassium-transporting ATPase KdpC subunit (209 aa).

Residues 18–38 (ALALFVLLGLGLGYSLVATGI) form a helical membrane-spanning segment.

It belongs to the KdpC family. As to quaternary structure, the system is composed of three essential subunits: KdpA, KdpB and KdpC.

It localises to the cell inner membrane. Functionally, part of the high-affinity ATP-driven potassium transport (or Kdp) system, which catalyzes the hydrolysis of ATP coupled with the electrogenic transport of potassium into the cytoplasm. This subunit acts as a catalytic chaperone that increases the ATP-binding affinity of the ATP-hydrolyzing subunit KdpB by the formation of a transient KdpB/KdpC/ATP ternary complex. This is Potassium-transporting ATPase KdpC subunit from Xanthomonas campestris pv. campestris (strain 8004).